The primary structure comprises 365 residues: 3-dehydroquinate synthase (365 aa).

NAD(+) contacts are provided by residues 69–74, 103–107, 127–128, lysine 140, and lysine 149; these read DGEAHK, GVIGD, and TT. Zn(2+)-binding residues include glutamate 182, histidine 245, and histidine 262.

Belongs to the sugar phosphate cyclases superfamily. Dehydroquinate synthase family. Co(2+) serves as cofactor. Zn(2+) is required as a cofactor. Requires NAD(+) as cofactor.

It localises to the cytoplasm. The enzyme catalyses 7-phospho-2-dehydro-3-deoxy-D-arabino-heptonate = 3-dehydroquinate + phosphate. It functions in the pathway metabolic intermediate biosynthesis; chorismate biosynthesis; chorismate from D-erythrose 4-phosphate and phosphoenolpyruvate: step 2/7. In terms of biological role, catalyzes the conversion of 3-deoxy-D-arabino-heptulosonate 7-phosphate (DAHP) to dehydroquinate (DHQ). In Pseudomonas putida (strain ATCC 700007 / DSM 6899 / JCM 31910 / BCRC 17059 / LMG 24140 / F1), this protein is 3-dehydroquinate synthase.